Here is a 232-residue protein sequence, read N- to C-terminus: Large ribosomal subunit protein uL1 (232 aa).

It belongs to the universal ribosomal protein uL1 family. Part of the 50S ribosomal subunit.

Its function is as follows. Binds directly to 23S rRNA. The L1 stalk is quite mobile in the ribosome, and is involved in E site tRNA release. In terms of biological role, protein L1 is also a translational repressor protein, it controls the translation of the L11 operon by binding to its mRNA. The protein is Large ribosomal subunit protein uL1 of Chlamydia caviae (strain ATCC VR-813 / DSM 19441 / 03DC25 / GPIC) (Chlamydophila caviae).